A 182-amino-acid chain; its full sequence is Flightin (182 aa).

A compositionally biased stretch (acidic residues) spans 1–15 (MADEEDPWGFDDGGE). The tract at residues 1–76 (MADEEDPWGF…PPPPEDDGYR (76 aa)) is disordered.

In terms of processing, several forms of flightin are thought to be produced through post-translational modifications, possibly by phosphorylation. In terms of tissue distribution, found only in indirect flight muscles (IFM).

Possibly involved in the regulation of flight muscles contraction, possibly by modulating actin-myosin interaction. The polypeptide is Flightin (fln) (Drosophila melanogaster (Fruit fly)).